A 144-amino-acid chain; its full sequence is MIKLESLQDPSPRKRRTKLLGRGPSSGHGKTSCRGHKGDGSRSGYKRRFGYEGGGVPLYRRVPTRGFSHARFDKCVEEITTQRLNALFSEGEEITLEALKQKKAIDKRAIRVKVIVKGDLEKTFIWKDANVVLSQGVRNLIGVA.

The interval 1–48 is disordered; sequence MIKLESLQDPSPRKRRTKLLGRGPSSGHGKTSCRGHKGDGSRSGYKRR.

This sequence belongs to the universal ribosomal protein uL15 family. In terms of assembly, part of the 50S ribosomal subunit.

Functionally, binds to the 23S rRNA. The sequence is that of Large ribosomal subunit protein uL15 from Chlamydia abortus (strain DSM 27085 / S26/3) (Chlamydophila abortus).